The sequence spans 189 residues: Peptidyl-tRNA hydrolase (189 aa).

Tyr-15 serves as a coordination point for tRNA. His-20 functions as the Proton acceptor in the catalytic mechanism. TRNA-binding residues include Phe-66, Asn-68, and Asn-114.

The protein belongs to the PTH family. In terms of assembly, monomer.

The protein localises to the cytoplasm. It catalyses the reaction an N-acyl-L-alpha-aminoacyl-tRNA + H2O = an N-acyl-L-amino acid + a tRNA + H(+). Hydrolyzes ribosome-free peptidyl-tRNAs (with 1 or more amino acids incorporated), which drop off the ribosome during protein synthesis, or as a result of ribosome stalling. Its function is as follows. Catalyzes the release of premature peptidyl moieties from peptidyl-tRNA molecules trapped in stalled 50S ribosomal subunits, and thus maintains levels of free tRNAs and 50S ribosomes. In Streptococcus pneumoniae (strain P1031), this protein is Peptidyl-tRNA hydrolase.